The following is a 1939-amino-acid chain: Myosin-6 (1939 aa).

One can recognise a Myosin N-terminal SH3-like domain in the interval 32-81 (DIRTECFVPDDKEEFVKAKILSREGGKVIAETENGKTVTVKEDQVLQQNP). The Myosin motor domain occupies 85–780 (DKIEDMAMLT…LLGLLEEMRD (696 aa)). N6,N6,N6-trimethyllysine is present on Lys129. 178–185 (GESGAGKT) contacts ATP. Thr379 is subject to Phosphothreonine. Ser417 carries the post-translational modification Phosphoserine. Actin-binding stretches follow at residues 657-679 (LNKL…IPNE) and 759-773 (KFGH…GLLG). The IQ domain maps to 783 to 812 (LSRIITRMQAQARGQLMRIEFKKIVERRDA). A coiled-coil region spans residues 842 to 1939 (LKSAETEKEM…GAKQKMHDEE (1098 aa)). Position 1139 is a phosphoserine (Ser1139). Tyr1261 carries the post-translational modification Phosphotyrosine. At Ser1271 the chain carries Phosphoserine. Phosphothreonine is present on residues Thr1277 and Thr1284. Ser1309 bears the Phosphoserine mark. Phosphotyrosine is present on Tyr1310. At Thr1311 the chain carries Phosphothreonine. Ser1512 is modified (phosphoserine). Thr1515 carries the phosphothreonine modification. Basic and acidic residues-rich tracts occupy residues 1826-1837 (GELEAEQKRNAE) and 1925-1939 (KSRD…HDEE). 2 disordered regions span residues 1826 to 1849 (GELE…ERRI) and 1909 to 1939 (EERA…HDEE).

Belongs to the TRAFAC class myosin-kinesin ATPase superfamily. Myosin family. Muscle myosin is a hexameric protein that consists of 2 heavy chain subunits (MHC), 2 alkali light chain subunits (MLC) and 2 regulatory light chain subunits (MLC-2).

It localises to the cytoplasm. Its subcellular location is the myofibril. Its function is as follows. Muscle contraction. This chain is Myosin-6 (MYH6), found in Homo sapiens (Human).